Consider the following 1299-residue polypeptide: Tenascin-N (1299 aa).

The first 28 residues, 1–28 (MSLQEMFRFPMGLLLGSVLLVASAPATL), serve as a signal peptide directing secretion. EGF-like domains are found at residues 167-198 (ERLACPGACSGHGRCVDGRCLCHEPYVGADCG), 199-229 (YPACPENCSGHGECVRGVCQCHEDFMSEDCS), and 230-260 (EKRCPGDCSGHGFCDTGECYCEEGFTGLDCA). 9 disulfides stabilise this stretch: cysteine 171–cysteine 181, cysteine 175–cysteine 186, cysteine 188–cysteine 197, cysteine 202–cysteine 212, cysteine 206–cysteine 217, cysteine 219–cysteine 228, cysteine 233–cysteine 243, cysteine 237–cysteine 248, and cysteine 250–cysteine 259. Fibronectin type-III domains follow at residues 264–352 (TPQG…TDLA), 353–444 (VLGT…TEID), 445–532 (SPTN…TEID), 533–623 (SPAN…IDSP), 624–709 (KNLV…TDID), 710–800 (SPQN…IDSP), 801–886 (QNLV…TEID), 887–976 (GPKN…LDPP), and 977–1063 (RNLR…VGAR). The interval 605–624 (GDRESKKADTNAPTDIDSPK) is disordered. Residues 960–977 (QESKKADTKAQTELDPPR) are compositionally biased toward basic and acidic residues. The disordered stretch occupies residues 960-982 (QESKKADTKAQTELDPPRNLRPS). One can recognise a Fibrinogen C-terminal domain in the interval 1061 to 1278 (GARFPHPSDC…YVELKIRPHG (218 aa)). The N-linked (GlcNAc...) asparagine glycan is linked to asparagine 1149.

This sequence belongs to the tenascin family. Homohexamer. In terms of tissue distribution, not detected in normal adult mammary tissues or brain but expressed in most breast tumors and brain tumors, such as glioblastomas, astrocytomas and oligodendrogliomas, tested. In brain tumors, detected around the endothelial cell layer of the clood vessels.

The protein resides in the secreted. The protein localises to the extracellular space. Its subcellular location is the extracellular matrix. Its function is as follows. Extracellular matrix protein that seems to be a ligand for ITGA8:ITGB1, ITGAV:ITGB1 and ITGA4:ITGB1. Involved in neurite outgrowth and cell migration in hippocampal explants. During endochondral bone formation, inhibits proliferation and differentiation of proteoblasts mediated by canonical WNT signaling. In tumors, stimulates angiogenesis by elongation, migration and sprouting of endothelial cells. Expressed in most mammary tumors, may facilitate tumorigenesis by supporting the migratory behavior of breast cancer cells. The protein is Tenascin-N of Homo sapiens (Human).